The following is a 509-amino-acid chain: 2-isopropylmalate synthase (509 aa).

The region spanning 5–267 (IQIFDTTLRD…QTALNLEETK (263 aa)) is the Pyruvate carboxyltransferase domain. Positions 14, 202, 204, and 238 each coordinate Mn(2+). The interval 391 to 509 (KLETLQLQYV…AAENVEKVGN (119 aa)) is regulatory domain.

This sequence belongs to the alpha-IPM synthase/homocitrate synthase family. LeuA type 1 subfamily. In terms of assembly, homodimer. Mn(2+) is required as a cofactor.

It is found in the cytoplasm. The enzyme catalyses 3-methyl-2-oxobutanoate + acetyl-CoA + H2O = (2S)-2-isopropylmalate + CoA + H(+). Its pathway is amino-acid biosynthesis; L-leucine biosynthesis; L-leucine from 3-methyl-2-oxobutanoate: step 1/4. Its function is as follows. Catalyzes the condensation of the acetyl group of acetyl-CoA with 3-methyl-2-oxobutanoate (2-ketoisovalerate) to form 3-carboxy-3-hydroxy-4-methylpentanoate (2-isopropylmalate). The protein is 2-isopropylmalate synthase of Staphylococcus aureus (strain bovine RF122 / ET3-1).